A 274-amino-acid polypeptide reads, in one-letter code: 2,3,4,5-tetrahydropyridine-2,6-dicarboxylate N-succinyltransferase (274 aa).

Substrate contacts are provided by arginine 104 and aspartate 141.

Belongs to the transferase hexapeptide repeat family. As to quaternary structure, homotrimer.

It is found in the cytoplasm. It carries out the reaction (S)-2,3,4,5-tetrahydrodipicolinate + succinyl-CoA + H2O = (S)-2-succinylamino-6-oxoheptanedioate + CoA. It functions in the pathway amino-acid biosynthesis; L-lysine biosynthesis via DAP pathway; LL-2,6-diaminopimelate from (S)-tetrahydrodipicolinate (succinylase route): step 1/3. This Salmonella typhi protein is 2,3,4,5-tetrahydropyridine-2,6-dicarboxylate N-succinyltransferase.